We begin with the raw amino-acid sequence, 197 residues long: Recombination protein RecR (197 aa).

The C4-type zinc-finger motif lies at 55–70; the sequence is CVQCRDFTESEICTIC. One can recognise a Toprim domain in the interval 78 to 173; it reads QQLCVVESPA…RPSRLAQGMP (96 aa).

The protein belongs to the RecR family.

In terms of biological role, may play a role in DNA repair. It seems to be involved in an RecBC-independent recombinational process of DNA repair. It may act with RecF and RecO. In Xanthomonas oryzae pv. oryzae (strain MAFF 311018), this protein is Recombination protein RecR.